A 133-amino-acid polypeptide reads, in one-letter code: Large ribosomal subunit protein bL19 (133 aa).

It belongs to the bacterial ribosomal protein bL19 family.

This protein is located at the 30S-50S ribosomal subunit interface and may play a role in the structure and function of the aminoacyl-tRNA binding site. This Sulfurihydrogenibium sp. (strain YO3AOP1) protein is Large ribosomal subunit protein bL19.